The sequence spans 354 residues: Dual-specificity RNA methyltransferase RlmN (354 aa).

Catalysis depends on glutamate 89, which acts as the Proton acceptor. A Radical SAM core domain is found at lysine 106 to aspartate 339. A disulfide bond links cysteine 113 and cysteine 344. Residues cysteine 120, cysteine 124, and cysteine 127 each contribute to the [4Fe-4S] cluster site. S-adenosyl-L-methionine contacts are provided by residues glycine 170–glutamate 171, serine 202, serine 225–histidine 227, and asparagine 301. Cysteine 344 acts as the S-methylcysteine intermediate in catalysis.

This sequence belongs to the radical SAM superfamily. RlmN family. [4Fe-4S] cluster is required as a cofactor.

It localises to the cytoplasm. It catalyses the reaction adenosine(2503) in 23S rRNA + 2 reduced [2Fe-2S]-[ferredoxin] + 2 S-adenosyl-L-methionine = 2-methyladenosine(2503) in 23S rRNA + 5'-deoxyadenosine + L-methionine + 2 oxidized [2Fe-2S]-[ferredoxin] + S-adenosyl-L-homocysteine. It carries out the reaction adenosine(37) in tRNA + 2 reduced [2Fe-2S]-[ferredoxin] + 2 S-adenosyl-L-methionine = 2-methyladenosine(37) in tRNA + 5'-deoxyadenosine + L-methionine + 2 oxidized [2Fe-2S]-[ferredoxin] + S-adenosyl-L-homocysteine. Functionally, specifically methylates position 2 of adenine 2503 in 23S rRNA and position 2 of adenine 37 in tRNAs. m2A2503 modification seems to play a crucial role in the proofreading step occurring at the peptidyl transferase center and thus would serve to optimize ribosomal fidelity. The polypeptide is Dual-specificity RNA methyltransferase RlmN (Nautilia profundicola (strain ATCC BAA-1463 / DSM 18972 / AmH)).